The chain runs to 151 residues: Ocs element-binding factor 1 (151 aa).

Residues 1–17 show a composition bias toward polar residues; it reads MSSSSLSPTAGRTSGSD. The tract at residues 1-47 is disordered; sequence MSSSSLSPTAGRTSGSDGDSAADTHRREKRRLSNRESARRSRLRKQQ. Over residues 22 to 39 the composition is skewed to basic and acidic residues; the sequence is ADTHRREKRRLSNRESAR. The region spanning 24 to 87 is the bZIP domain; that stretch reads THRREKRRLS…TRVEQENTVL (64 aa). The basic motif stretch occupies residues 26–45; sequence RREKRRLSNRESARRSRLRK. Residues 52-59 form a leucine-zipper region; that stretch reads LVQEVARL.

Belongs to the bZIP family. Roots and shoots of young plants, and basal portion of leaves.

It is found in the nucleus. In terms of biological role, may contribute to developmentally specific patterns of gene expression. Binds specifically to ocs elements which are transcriptional enhancer found in the promoters of several plant genes. OCSBF-1 is able to bind to a site within each half of the ocs element as well as to animal AP-1 and CREB sites. The protein is Ocs element-binding factor 1 (OBF1) of Zea mays (Maize).